Consider the following 369-residue polypeptide: Putative agmatine deiminase (369 aa).

Cysteine 355 acts as the Amidino-cysteine intermediate in catalysis.

This sequence belongs to the agmatine deiminase family.

It catalyses the reaction agmatine + H2O = N-carbamoylputrescine + NH4(+). The sequence is that of Putative agmatine deiminase from Marinomonas sp. (strain MWYL1).